Here is a 121-residue protein sequence, read N- to C-terminus: Histone H2B.6 (121 aa).

Residues 1 to 28 (MAPKAEKKPKVEKRVPGKEGETSKKKAK) are disordered. Residues Lys-7 and Lys-13 each carry the N6-acetyllysine modification.

It belongs to the histone H2B family. The nucleosome is a histone octamer containing two molecules each of H2A, H2B, H3 and H4 assembled in one H3-H4 heterotetramer and two H2A-H2B heterodimers. The octamer wraps approximately 147 bp of DNA. Post-translationally, can be acetylated to form H2BK6ac and H2BK33ac. In terms of tissue distribution, expressed preferentially in meristematic tissues.

The protein localises to the nucleus. The protein resides in the chromosome. Core component of nucleosome. Nucleosomes wrap and compact DNA into chromatin, limiting DNA accessibility to the cellular machineries which require DNA as a template. Histones thereby play a central role in transcription regulation, DNA repair, DNA replication and chromosomal stability. DNA accessibility is regulated via a complex set of post-translational modifications of histones, also called histone code, and nucleosome remodeling. This is Histone H2B.6 (TH123) from Triticum aestivum (Wheat).